Consider the following 227-residue polypeptide: Cytochrome c oxidase subunit 2 (227 aa).

Residues 1–14 are Mitochondrial intermembrane-facing; sequence MAYPFQLGLQDATS. The chain crosses the membrane as a helical span at residues 15–45; the sequence is PIMEELLHFHDHALMIVFLISSLVLYIISLM. Over 46 to 59 the chain is Mitochondrial matrix; the sequence is LTTKLTHTSTMDAQ. Residues 60 to 87 traverse the membrane as a helical segment; that stretch reads EVETVWTILPAIILILIALPSLRILYMM. The Mitochondrial intermembrane portion of the chain corresponds to 88–227; it reads DEINNPSLTV…YFETWSALMV (140 aa). Residues H161, C196, E198, C200, H204, and M207 each coordinate Cu cation. Mg(2+) is bound at residue E198. Y218 is subject to Phosphotyrosine.

Belongs to the cytochrome c oxidase subunit 2 family. In terms of assembly, component of the cytochrome c oxidase (complex IV, CIV), a multisubunit enzyme composed of 14 subunits. The complex is composed of a catalytic core of 3 subunits MT-CO1, MT-CO2 and MT-CO3, encoded in the mitochondrial DNA, and 11 supernumerary subunits COX4I, COX5A, COX5B, COX6A, COX6B, COX6C, COX7A, COX7B, COX7C, COX8 and NDUFA4, which are encoded in the nuclear genome. The complex exists as a monomer or a dimer and forms supercomplexes (SCs) in the inner mitochondrial membrane with NADH-ubiquinone oxidoreductase (complex I, CI) and ubiquinol-cytochrome c oxidoreductase (cytochrome b-c1 complex, complex III, CIII), resulting in different assemblies (supercomplex SCI(1)III(2)IV(1) and megacomplex MCI(2)III(2)IV(2)). Found in a complex with TMEM177, COA6, COX18, COX20, SCO1 and SCO2. Interacts with TMEM177 in a COX20-dependent manner. Interacts with COX20. Interacts with COX16. It depends on Cu cation as a cofactor.

The protein resides in the mitochondrion inner membrane. It catalyses the reaction 4 Fe(II)-[cytochrome c] + O2 + 8 H(+)(in) = 4 Fe(III)-[cytochrome c] + 2 H2O + 4 H(+)(out). Its function is as follows. Component of the cytochrome c oxidase, the last enzyme in the mitochondrial electron transport chain which drives oxidative phosphorylation. The respiratory chain contains 3 multisubunit complexes succinate dehydrogenase (complex II, CII), ubiquinol-cytochrome c oxidoreductase (cytochrome b-c1 complex, complex III, CIII) and cytochrome c oxidase (complex IV, CIV), that cooperate to transfer electrons derived from NADH and succinate to molecular oxygen, creating an electrochemical gradient over the inner membrane that drives transmembrane transport and the ATP synthase. Cytochrome c oxidase is the component of the respiratory chain that catalyzes the reduction of oxygen to water. Electrons originating from reduced cytochrome c in the intermembrane space (IMS) are transferred via the dinuclear copper A center (CU(A)) of subunit 2 and heme A of subunit 1 to the active site in subunit 1, a binuclear center (BNC) formed by heme A3 and copper B (CU(B)). The BNC reduces molecular oxygen to 2 water molecules using 4 electrons from cytochrome c in the IMS and 4 protons from the mitochondrial matrix. The sequence is that of Cytochrome c oxidase subunit 2 (MT-CO2) from Canis aureus (Golden jackal).